The sequence spans 435 residues: ATP-dependent RNA helicase RhlB (435 aa).

Positions 9–37 match the Q motif motif; it reads QKFADFSLQTEIKTALNESGFEYCTPIQA. The Helicase ATP-binding domain maps to 40-219; it reads LPILLQKKDI…YDHMNEPEKV (180 aa). Residue 53 to 60 participates in ATP binding; sequence AQTGTGKT. Residues 165-168 carry the DEAD box motif; sequence DEAD. The Helicase C-terminal domain maps to 243 to 390; it reads KMRLLLTLLE…VTNYDSEALL (148 aa). Residues 395-435 are disordered; sequence APVRVHRKHNSRPQGRSGSGGKPRSGNRNAPRRHDKTRRHS. A compositionally biased stretch (basic residues) spans 424-435; that stretch reads APRRHDKTRRHS.

The protein belongs to the DEAD box helicase family. RhlB subfamily. As to quaternary structure, component of the RNA degradosome, which is a multiprotein complex involved in RNA processing and mRNA degradation.

The protein resides in the cytoplasm. It catalyses the reaction ATP + H2O = ADP + phosphate + H(+). In terms of biological role, DEAD-box RNA helicase involved in RNA degradation. Has RNA-dependent ATPase activity and unwinds double-stranded RNA. In Shewanella sediminis (strain HAW-EB3), this protein is ATP-dependent RNA helicase RhlB.